The primary structure comprises 184 residues: ATP synthase subunit b, chloroplastic (184 aa).

A helical transmembrane segment spans residues 27–49; sequence LATNPINLSVVLGVLIFFGKGVL.

This sequence belongs to the ATPase B chain family. F-type ATPases have 2 components, F(1) - the catalytic core - and F(0) - the membrane proton channel. F(1) has five subunits: alpha(3), beta(3), gamma(1), delta(1), epsilon(1). F(0) has four main subunits: a(1), b(1), b'(1) and c(10-14). The alpha and beta chains form an alternating ring which encloses part of the gamma chain. F(1) is attached to F(0) by a central stalk formed by the gamma and epsilon chains, while a peripheral stalk is formed by the delta, b and b' chains.

The protein resides in the plastid. It is found in the chloroplast thylakoid membrane. F(1)F(0) ATP synthase produces ATP from ADP in the presence of a proton or sodium gradient. F-type ATPases consist of two structural domains, F(1) containing the extramembraneous catalytic core and F(0) containing the membrane proton channel, linked together by a central stalk and a peripheral stalk. During catalysis, ATP synthesis in the catalytic domain of F(1) is coupled via a rotary mechanism of the central stalk subunits to proton translocation. Functionally, component of the F(0) channel, it forms part of the peripheral stalk, linking F(1) to F(0). The protein is ATP synthase subunit b, chloroplastic of Nicotiana tomentosiformis (Tobacco).